The chain runs to 418 residues: 3-isopropylmalate dehydratase large subunit (418 aa).

Cys299, Cys359, and Cys362 together coordinate [4Fe-4S] cluster.

It belongs to the aconitase/IPM isomerase family. LeuC type 2 subfamily. As to quaternary structure, heterodimer of LeuC and LeuD. Requires [4Fe-4S] cluster as cofactor.

The catalysed reaction is (2R,3S)-3-isopropylmalate = (2S)-2-isopropylmalate. Its pathway is amino-acid biosynthesis; L-leucine biosynthesis; L-leucine from 3-methyl-2-oxobutanoate: step 2/4. In terms of biological role, catalyzes the isomerization between 2-isopropylmalate and 3-isopropylmalate, via the formation of 2-isopropylmaleate. The sequence is that of 3-isopropylmalate dehydratase large subunit from Oleidesulfovibrio alaskensis (strain ATCC BAA-1058 / DSM 17464 / G20) (Desulfovibrio alaskensis).